Consider the following 161-residue polypeptide: Nucleotide-binding protein Bd0338 (161 aa).

It belongs to the YajQ family.

Nucleotide-binding protein. This Bdellovibrio bacteriovorus (strain ATCC 15356 / DSM 50701 / NCIMB 9529 / HD100) protein is Nucleotide-binding protein Bd0338.